Reading from the N-terminus, the 347-residue chain is Ribosomal RNA small subunit methyltransferase C (347 aa).

Belongs to the methyltransferase superfamily. RsmC family. Monomer.

It is found in the cytoplasm. The catalysed reaction is guanosine(1207) in 16S rRNA + S-adenosyl-L-methionine = N(2)-methylguanosine(1207) in 16S rRNA + S-adenosyl-L-homocysteine + H(+). Its function is as follows. Specifically methylates the guanine in position 1207 of 16S rRNA in the 30S particle. The protein is Ribosomal RNA small subunit methyltransferase C of Yersinia enterocolitica serotype O:8 / biotype 1B (strain NCTC 13174 / 8081).